The sequence spans 862 residues: Putative cargo-transport protein ypp1 (862 aa).

TPR repeat units lie at residues 342 to 377, 460 to 493, and 494 to 527; these read QQIFRSLVFFLRHIEEFEEASEAFEIYKFLCVKSHE, SFMYYQANNPSLRERYHQKSVQSYQKCLEKQPTN, and TNALFHLAMQYSERRAITDAMQIVRRLLEVNPKY. Ser632, Ser633, and Ser637 each carry phosphoserine. TPR repeat units lie at residues 665-698, 705-738, 740-772, and 814-847; these read ILGFSRKSSLKRSTVLSKKSHSSYKENFQLRRGK, QKLWLTAASLFLKSGNDDQARSALLEAKKIDHEC, WVYYLNGLSLLQQGKEVEGYEQLDVAHYLDPED, and PEAWYYTAEIFRQLGDLKQAAFSYDYCIQLADTN.

This sequence belongs to the YPP1 family.

It localises to the cytoplasm. Its function is as follows. Involved in endocytosis. In Schizosaccharomyces pombe (strain 972 / ATCC 24843) (Fission yeast), this protein is Putative cargo-transport protein ypp1 (ypp1).